The primary structure comprises 604 residues: MPVTMETSKEHSKKRKRKHGGSGNAALTSANAAKSLVKTTLSSKGEASAEKQEMKKRKTEHPSLMEDRVSENVVDEPEEVVEEDSEASQPPVEQDDEQKSESEQQPELPSLNALSLPQTENEPQKFTELNLSEKTLKAIQEMGFETMTEIQRRGIPPLMAGRDVLGAAKTGSGKTLSFLIPAVEMLSALRFKPRNGTGVIVVSPTRELALQIFGVARELMAHHSQTYGIVIGGANRRAEAEKLTKGVNLLIATPGRLLDHLQNTDGFVFKNLKALVIDEADRILEVGFEDEMRQIVKILPSEDRQTMLFSATQTTKVEDLARISLRPGPLYINVDHRKEHSTVEGLEQGYVICDSDKRFLLLFSFLKRNLKKKIIVFFSSCNCVKYHAELLNYIDLPVLDLHGKQKQQKRTNTFFEFCNAKQGTLICTDVAARGLDIPAVDWIIQFDPPDDPRDYIHRVGRTARGANGKGRSLMFLQPSEVGFLKHLKDARVPVVEFEFPAKKIVNVQSQLEKLIGQNYYLNKSAKDGYRSYLQAYASHSLRSVFDVNKLDLVKVAKGFGFPTPPRVDISLGASMSRDKKQTSRRNYGSQPRHAPKFKRKTSDD.

A disordered region spans residues 1–126; it reads MPVTMETSKE…PQTENEPQKF (126 aa). Positions 11–20 are enriched in basic residues; the sequence is HSKKRKRKHG. Residues 25 to 45 are compositionally biased toward polar residues; it reads AALTSANAAKSLVKTTLSSKG. The segment covering 60–70 has biased composition (basic and acidic residues); the sequence is EHPSLMEDRVS. Acidic residues predominate over residues 73–86; the sequence is VVDEPEEVVEEDSE. Positions 112–121 are enriched in polar residues; that stretch reads NALSLPQTEN. The Q motif motif lies at 124-152; it reads QKFTELNLSEKTLKAIQEMGFETMTEIQR. The region spanning 155–331 is the Helicase ATP-binding domain; it reads IPPLMAGRDV…RISLRPGPLY (177 aa). 168–175 is a binding site for ATP; the sequence is AKTGSGKT. Residues 278–281 carry the DEAD box motif; it reads DEAD. Positions 345–515 constitute a Helicase C-terminal domain; that stretch reads GLEQGYVICD…NVQSQLEKLI (171 aa). The tract at residues 570-604 is disordered; it reads SLGASMSRDKKQTSRRNYGSQPRHAPKFKRKTSDD. A compositionally biased stretch (basic residues) spans 593–604; the sequence is HAPKFKRKTSDD.

Belongs to the DEAD box helicase family. DDX18/HAS1 subfamily. As to quaternary structure, associates in the nucleolus with the 60S and pre-60S ribosomal subunits.

Its subcellular location is the nucleus. It localises to the nucleolus. It carries out the reaction ATP + H2O = ADP + phosphate + H(+). Functionally, ATP-dependent RNA helicase involved in 40S ribosomal subunit biogenesis. Required for the processing and cleavage of 35S pre-rRNA at sites A0, A1, and A2, leading to mature 18S rRNA. This Coccidioides immitis (strain RS) (Valley fever fungus) protein is ATP-dependent RNA helicase HAS1 (HAS1).